The chain runs to 189 residues: dCTP deaminase (189 aa).

DCTP contacts are provided by residues K112–R117, T136–E138, Q157, Y171, and Q181. Catalysis depends on E138, which acts as the Proton donor/acceptor.

It belongs to the dCTP deaminase family. Homotrimer.

It carries out the reaction dCTP + H2O + H(+) = dUTP + NH4(+). Its pathway is pyrimidine metabolism; dUMP biosynthesis; dUMP from dCTP (dUTP route): step 1/2. Functionally, catalyzes the deamination of dCTP to dUTP. In Acinetobacter baylyi (strain ATCC 33305 / BD413 / ADP1), this protein is dCTP deaminase.